A 295-amino-acid polypeptide reads, in one-letter code: Small ribosomal subunit protein uS2 (295 aa).

A disordered region spans residues 232–295; it reads RRRGTDEKPE…DEQPAAAAAE (64 aa). A compositionally biased stretch (basic and acidic residues) spans 252–287; it reads EWERELLEEPKKSDEQPAKSDELPVKTDEQPTKSDE.

It belongs to the universal ribosomal protein uS2 family.

This chain is Small ribosomal subunit protein uS2, found in Salinispora tropica (strain ATCC BAA-916 / DSM 44818 / JCM 13857 / NBRC 105044 / CNB-440).